The chain runs to 593 residues: Meiosis-specific APC/C activator protein AMA1 (593 aa).

Positions 1 to 11 (MATPHLYHRYN) are enriched in basic residues. The segment at 1 to 26 (MATPHLYHRYNSKSSNKNINSSGNST) is disordered. The segment covering 12–25 (SKSSNKNINSSGNS) has biased composition (low complexity). Positions 29–35 (DRFIPKS) match the C-box motif. A compositionally biased stretch (low complexity) spans 94-109 (SSISSSSESQVTRSGS). Residues 94–125 (SSISSSSESQVTRSGSARASRNDYSKLTKEQK) are disordered. Basic and acidic residues predominate over residues 113 to 125 (SRNDYSKLTKEQK). 6 WD repeats span residues 226–264 (RNDFYSNLISWSRTTNNVLVGLGCSVYIWSEKEGAVSIL), 271–310 (EKRDLVTCVSFCPYNTYFIVGTKFGRILLYDQKEFFHSSN), 323–364 (ESFK…FPIK), 388–427 (AQAQQVCGISLNEHANLLAVGGNDNSCSLWDISDLDKPIK), 432–474 (PHKA…LLDE), and 525–564 (PNPLRVLSAVISPSSMAICVATNDETIRFYELWNDKEEII).

Belongs to the WD repeat CDC20/Fizzy family. As to quaternary structure, interacts with CDC16.

Activator protein that regulates the ubiquitin ligase activity and substrate specificity of the anaphase promoting complex/cyclosome (APC/C). Required for the ubiquitination and subsequent degradation of the B-type cyclin CLB1 by the APC/C complex during meiosis. Required for meiosis I, late meiotic gene expression and spore wall assembly. In Saccharomyces cerevisiae (strain ATCC 204508 / S288c) (Baker's yeast), this protein is Meiosis-specific APC/C activator protein AMA1 (AMA1).